Here is a 91-residue protein sequence, read N- to C-terminus: N(2)-fixation sustaining protein CowN (91 aa).

Belongs to the CowN family.

Its function is as follows. Is required to sustain N(2)-dependent growth in the presence of low levels of carbon monoxide (CO). Probably acts by protecting the N(2) fixation ability of the nitrogenase complex, which is inactivated in the presence of CO. The chain is N(2)-fixation sustaining protein CowN from Beijerinckia indica subsp. indica (strain ATCC 9039 / DSM 1715 / NCIMB 8712).